The following is a 720-amino-acid chain: Collectin-12 (720 aa).

The Cytoplasmic segment spans residues 1-37 (MKDDFNDEEEVQSFGYKRFGIQEGNECTKCKNDWALR). The chain crosses the membrane as a helical; Signal-anchor for type II membrane protein span at residues 38–58 (VAIALLYVLCALLTIAVAVLG). Over 59 to 720 (YKVVQRMDNV…RTNESKVPVL (662 aa)) the chain is Extracellular. Coiled coils occupy residues 95-120 (EKSENATSELHSFKLEFQTLQKQLSD), 216-267 (ISSL…LAAN), and 377-408 (LHGLNNSVAETRAESTELKAQQEELAVRLDKE). A disordered region spans residues 433 to 576 (FTILQGPPGP…GPPGLPGLPA (144 aa)). Collagen-like domains follow at residues 444–503 (GPRG…PGPK) and 510–569 (GRQG…PGPP). The span at 460 to 479 (PKGEKGEKGAPGDAGPKGEK) shows a compositional bias: basic and acidic residues. A compositionally biased stretch (low complexity) spans 488–503 (PGLKGPPGSRGSPGPK). The span at 504–513 (GSRGSGGRQG) shows a compositional bias: gly residues. The span at 527 to 560 (PGRDGQPGPTGPQGPQGLRGPAGPAGLEGARGPV) shows a compositional bias: low complexity. Positions 562-576 (PIGPPGPPGLPGLPA) are enriched in pro residues. Intrachain disulfides connect Cys604/Cys615, Cys634/Cys709, and Cys687/Cys701. A C-type lectin domain is found at 611–710 (FREQCYHFSA…CTERIGFICE (100 aa)). The Ca(2+) site is built by Ile643, Asn645, and Glu649. A carbohydrate contacts are provided by Lys670, Gln673, and Asp675. Ca(2+) contacts are provided by Gln673, Asp675, Asn676, Glu685, Asp686, Asn697, Asp698, and Glu710. Glu685 contacts a carbohydrate. Residues Asn697 and Asp698 each contribute to the a carbohydrate site.

The protein resides in the membrane. In terms of biological role, scavenger receptor that displays several functions associated with host defense. Binds to carbohydrates. The sequence is that of Collectin-12 (colec12) from Danio rerio (Zebrafish).